The primary structure comprises 406 residues: Imidazolonepropionase (406 aa).

Residues histidine 67 and histidine 69 each contribute to the Fe(3+) site. Zn(2+) is bound by residues histidine 67 and histidine 69. Residues arginine 76, tyrosine 139, and histidine 172 each coordinate 4-imidazolone-5-propanoate. Tyrosine 139 contacts N-formimidoyl-L-glutamate. Residue histidine 237 coordinates Fe(3+). Histidine 237 is a binding site for Zn(2+). Glutamine 240 lines the 4-imidazolone-5-propanoate pocket. Aspartate 312 provides a ligand contact to Fe(3+). Aspartate 312 serves as a coordination point for Zn(2+). Asparagine 314 and glycine 316 together coordinate N-formimidoyl-L-glutamate. Position 317 (threonine 317) interacts with 4-imidazolone-5-propanoate.

It belongs to the metallo-dependent hydrolases superfamily. HutI family. Requires Zn(2+) as cofactor. Fe(3+) is required as a cofactor.

Its subcellular location is the cytoplasm. The catalysed reaction is 4-imidazolone-5-propanoate + H2O = N-formimidoyl-L-glutamate. It functions in the pathway amino-acid degradation; L-histidine degradation into L-glutamate; N-formimidoyl-L-glutamate from L-histidine: step 3/3. Its function is as follows. Catalyzes the hydrolytic cleavage of the carbon-nitrogen bond in imidazolone-5-propanoate to yield N-formimidoyl-L-glutamate. It is the third step in the universal histidine degradation pathway. The protein is Imidazolonepropionase of Paraburkholderia phymatum (strain DSM 17167 / CIP 108236 / LMG 21445 / STM815) (Burkholderia phymatum).